The chain runs to 165 residues: Peptide methionine sulfoxide reductase MsrA (165 aa).

Residue Cys-10 is part of the active site.

Belongs to the MsrA Met sulfoxide reductase family.

The enzyme catalyses L-methionyl-[protein] + [thioredoxin]-disulfide + H2O = L-methionyl-(S)-S-oxide-[protein] + [thioredoxin]-dithiol. It catalyses the reaction [thioredoxin]-disulfide + L-methionine + H2O = L-methionine (S)-S-oxide + [thioredoxin]-dithiol. Functionally, has an important function as a repair enzyme for proteins that have been inactivated by oxidation. Catalyzes the reversible oxidation-reduction of methionine sulfoxide in proteins to methionine. This Campylobacter jejuni subsp. jejuni serotype O:6 (strain 81116 / NCTC 11828) protein is Peptide methionine sulfoxide reductase MsrA.